The following is a 354-amino-acid chain: Photosystem II D2 protein (354 aa).

Thr2 is subject to N-acetylthreonine. Thr2 is modified (phosphothreonine). The chain crosses the membrane as a helical span at residues 42-62; sequence CAYFALGGWFTGTTFVTSWYT. Position 119 (His119) interacts with chlorophyll a. Residues 126–142 traverse the membrane as a helical segment; sequence GFMLRQFELARSVQLRP. Pheophytin a is bound by residues Gln131 and Asn144. The chain crosses the membrane as a helical span at residues 154–167; sequence VFVSVFLIYPLGQS. Residue His199 participates in chlorophyll a binding. A helical membrane pass occupies residues 209 to 229; sequence AALLCAIHGATVENTLFEDGD. His216 and Phe263 together coordinate a plastoquinone. His216 is a binding site for Fe cation. His270 is a Fe cation binding site. The chain crosses the membrane as a helical span at residues 280 to 296; the sequence is GLWMSALGVVGLALNLR.

Belongs to the reaction center PufL/M/PsbA/D family. As to quaternary structure, PSII is composed of 1 copy each of membrane proteins PsbA, PsbB, PsbC, PsbD, PsbE, PsbF, PsbH, PsbI, PsbJ, PsbK, PsbL, PsbM, PsbT, PsbX, PsbY, PsbZ, Psb30/Ycf12, at least 3 peripheral proteins of the oxygen-evolving complex and a large number of cofactors. It forms dimeric complexes. It depends on The D1/D2 heterodimer binds P680, chlorophylls that are the primary electron donor of PSII, and subsequent electron acceptors. It shares a non-heme iron and each subunit binds pheophytin, quinone, additional chlorophylls, carotenoids and lipids. There is also a Cl(-1) ion associated with D1 and D2, which is required for oxygen evolution. The PSII complex binds additional chlorophylls, carotenoids and specific lipids. as a cofactor.

Its subcellular location is the plastid. The protein resides in the chloroplast thylakoid membrane. The catalysed reaction is 2 a plastoquinone + 4 hnu + 2 H2O = 2 a plastoquinol + O2. Functionally, photosystem II (PSII) is a light-driven water:plastoquinone oxidoreductase that uses light energy to abstract electrons from H(2)O, generating O(2) and a proton gradient subsequently used for ATP formation. It consists of a core antenna complex that captures photons, and an electron transfer chain that converts photonic excitation into a charge separation. The D1/D2 (PsbA/PsbD) reaction center heterodimer binds P680, the primary electron donor of PSII as well as several subsequent electron acceptors. D2 is needed for assembly of a stable PSII complex. The sequence is that of Photosystem II D2 protein from Piper cenocladum (Ant piper).